A 740-amino-acid polypeptide reads, in one-letter code: Phosphoribosylformylglycinamidine synthase subunit PurL (740 aa).

Histidine 55 is a catalytic residue. The ATP site is built by tyrosine 58 and lysine 97. Position 99 (glutamate 99) interacts with Mg(2+). Substrate is bound by residues 100–103 (SHNH) and arginine 122. The active-site Proton acceptor is histidine 101. A Mg(2+)-binding site is contributed by aspartate 123. Glutamine 246 is a binding site for substrate. Mg(2+) is bound at residue aspartate 276. A substrate-binding site is contributed by 320-322 (ESQ). ATP-binding residues include aspartate 501 and glycine 538. Residue asparagine 539 participates in Mg(2+) binding. Serine 541 is a substrate binding site.

It belongs to the FGAMS family. Monomer. Part of the FGAM synthase complex composed of 1 PurL, 1 PurQ and 2 PurS subunits.

The protein localises to the cytoplasm. It catalyses the reaction N(2)-formyl-N(1)-(5-phospho-beta-D-ribosyl)glycinamide + L-glutamine + ATP + H2O = 2-formamido-N(1)-(5-O-phospho-beta-D-ribosyl)acetamidine + L-glutamate + ADP + phosphate + H(+). It functions in the pathway purine metabolism; IMP biosynthesis via de novo pathway; 5-amino-1-(5-phospho-D-ribosyl)imidazole from N(2)-formyl-N(1)-(5-phospho-D-ribosyl)glycinamide: step 1/2. Functionally, part of the phosphoribosylformylglycinamidine synthase complex involved in the purines biosynthetic pathway. Catalyzes the ATP-dependent conversion of formylglycinamide ribonucleotide (FGAR) and glutamine to yield formylglycinamidine ribonucleotide (FGAM) and glutamate. The FGAM synthase complex is composed of three subunits. PurQ produces an ammonia molecule by converting glutamine to glutamate. PurL transfers the ammonia molecule to FGAR to form FGAM in an ATP-dependent manner. PurS interacts with PurQ and PurL and is thought to assist in the transfer of the ammonia molecule from PurQ to PurL. In Lacticaseibacillus casei (Lactobacillus casei), this protein is Phosphoribosylformylglycinamidine synthase subunit PurL.